The sequence spans 388 residues: Acyl-CoA dehydrogenase fadE12 (388 aa).

It belongs to the acyl-CoA dehydrogenase family. FAD serves as cofactor.

The enzyme catalyses a 2,3-saturated acyl-CoA + A = a 2,3-dehydroacyl-CoA + AH2. The sequence is that of Acyl-CoA dehydrogenase fadE12 (fadE12) from Mycobacterium bovis (strain ATCC BAA-935 / AF2122/97).